A 432-amino-acid polypeptide reads, in one-letter code: MHISVVGLSHRTAPVEIRERLSIPEQTMETSLQSLRGNEQVLEASILSTCNRLEIYTLVRNPDLGVSAVSDFLSSHSGLETGELTPHLFSYHHEDAVDHLMRVAAGLDSLVLGEGQILSQVKKMMRLGQEHKSLGPILNRLLTQAVTTGKRVRSETNLGTGAVSISSAAVELAQLKLGQSRGLDHLVTLESEQIAVVGAGRMSRLLLQHLQAKGASGVVLLNRTVERAEQLSADFPDLPVQCRPLTDLDQYLSTCSLMFTSTAADDPIIDAARLAPLNRRSKLRLIDIGVPRNIAADAADVNGVESHDVDDLQEVVARNQEARQAMAREAEQLLQQEAQQFLEWWDSLEAVPTINQLRSSMESIRTEELQKALSRMGPDFSARERKVVEALSKGIINKILHTPVTQLRAPQTRQDRQQALRIVERLFDLEAS.

Substrate contacts are provided by residues 49–52 (TCNR), S109, 114–116 (EGQ), and Q120. The Nucleophile role is filled by C50. An NADP(+)-binding site is contributed by 198–203 (GAGRMS).

It belongs to the glutamyl-tRNA reductase family. As to quaternary structure, homodimer.

It catalyses the reaction (S)-4-amino-5-oxopentanoate + tRNA(Glu) + NADP(+) = L-glutamyl-tRNA(Glu) + NADPH + H(+). It functions in the pathway porphyrin-containing compound metabolism; protoporphyrin-IX biosynthesis; 5-aminolevulinate from L-glutamyl-tRNA(Glu): step 1/2. Its pathway is porphyrin-containing compound metabolism; chlorophyll biosynthesis. In terms of biological role, catalyzes the NADPH-dependent reduction of glutamyl-tRNA(Glu) to glutamate 1-semialdehyde (GSA). The chain is Glutamyl-tRNA reductase from Synechococcus sp. (strain CC9605).